A 443-amino-acid polypeptide reads, in one-letter code: Glutamine synthetase (443 aa).

In terms of domain architecture, GS beta-grasp spans K16–K97. The region spanning P103–I443 is the GS catalytic domain. Positions 126 and 128 each coordinate Mg(2+). An ATP-binding site is contributed by E176. E181 and E188 together coordinate Mg(2+). Residue G233 coordinates L-glutamate. H237 provides a ligand contact to Mg(2+). Residues H239 to S241 and S241 each bind ATP. L-glutamate contacts are provided by R287, E293, and R305. Residues R305 and R310 each coordinate ATP. E322 lines the Mg(2+) pocket. R324 contributes to the L-glutamate binding site.

This sequence belongs to the glutamine synthetase family. In terms of assembly, oligomer of 12 subunits arranged in the form of two hexagons. Requires Mg(2+) as cofactor.

The protein resides in the cytoplasm. The catalysed reaction is L-glutamate + NH4(+) + ATP = L-glutamine + ADP + phosphate + H(+). Functionally, probably involved in nitrogen metabolism via ammonium assimilation. Catalyzes the ATP-dependent biosynthesis of glutamine from glutamate and ammonia. This Pyrococcus horikoshii (strain ATCC 700860 / DSM 12428 / JCM 9974 / NBRC 100139 / OT-3) protein is Glutamine synthetase.